The primary structure comprises 480 residues: F-box/LRR-repeat protein 14 (480 aa).

Residues 11-58 (DRQMDELPDHLVWDILSKLHTTDDRNSLSLSCKRFFSLDNEQRYSLRI) enclose the F-box domain. 15 LRR repeats span residues 61 to 86 (GLVP…EIIY), 94 to 119 (GKQV…TLSF), 120 to 144 (CTFI…KLNF), 145 to 170 (APRI…HLIR), 171 to 196 (CLNV…CIKN), 197 to 222 (CRAI…QFEV), 229 to 257 (MKVY…SLGN), 258 to 283 (CIIA…HLDM), 284 to 309 (CTGV…SLRV), 322 to 347 (TLRL…KISF), 355 to 379 (LFSF…SLDH), 380 to 404 (VCVF…ELVH), 405 to 429 (CQEV…KLSK), 430 to 454 (CLGV…VVED), and 455 to 480 (CPQV…SWMY).

The protein is F-box/LRR-repeat protein 14 (FBL14) of Arabidopsis thaliana (Mouse-ear cress).